The primary structure comprises 271 residues: 1,4-dihydroxy-2-naphthoyl-CoA synthase (271 aa).

Substrate contacts are provided by residues 71–75 (SGGDQ), Y83, 115–119 (YAIGG), T141, S147, Y244, and K259. Residue 140–142 (QTG) coordinates hydrogencarbonate. The span at 250–263 (KEGRDSFKEKRKPD) shows a compositional bias: basic and acidic residues. The interval 250–271 (KEGRDSFKEKRKPDFGQFPRFP) is disordered.

The protein belongs to the enoyl-CoA hydratase/isomerase family. MenB subfamily. The cofactor is hydrogencarbonate.

The enzyme catalyses 2-succinylbenzoyl-CoA + H(+) = 1,4-dihydroxy-2-naphthoyl-CoA + H2O. It participates in quinol/quinone metabolism; 1,4-dihydroxy-2-naphthoate biosynthesis; 1,4-dihydroxy-2-naphthoate from chorismate: step 6/7. It functions in the pathway quinol/quinone metabolism; menaquinone biosynthesis. In terms of biological role, converts o-succinylbenzoyl-CoA (OSB-CoA) to 1,4-dihydroxy-2-naphthoyl-CoA (DHNA-CoA). This chain is 1,4-dihydroxy-2-naphthoyl-CoA synthase, found in Bacillus subtilis (strain 168).